The primary structure comprises 282 residues: Stage 0 sporulation protein J (282 aa).

The segment at residues E139 to L158 is a DNA-binding region (H-T-H motif).

This sequence belongs to the ParB family.

The protein resides in the cytoplasm. It is found in the nucleoid. Its function is as follows. Required for the initiation of sporulation and for normal chromosome segregation. Antagonizes sporulation inhibition by Soj. It probably interacts with a specific DNA site and other proteins involved in partitioning and cell division, and antagonizes Soj in response to cell cycle events related to chromosome partitioning. This chain is Stage 0 sporulation protein J, found in Bacillus subtilis (strain 168).